The sequence spans 161 residues: Phosphopantetheine adenylyltransferase (161 aa).

Residue Thr9 coordinates substrate. ATP-binding positions include 9-10 (TF) and His17. Residues Lys41, Leu73, and Arg87 each coordinate substrate. Residues 88-90 (GLR), Glu98, and 123-129 (YQFISGT) each bind ATP.

It belongs to the bacterial CoaD family. Homohexamer. It depends on Mg(2+) as a cofactor.

Its subcellular location is the cytoplasm. The enzyme catalyses (R)-4'-phosphopantetheine + ATP + H(+) = 3'-dephospho-CoA + diphosphate. It participates in cofactor biosynthesis; coenzyme A biosynthesis; CoA from (R)-pantothenate: step 4/5. Reversibly transfers an adenylyl group from ATP to 4'-phosphopantetheine, yielding dephospho-CoA (dPCoA) and pyrophosphate. The polypeptide is Phosphopantetheine adenylyltransferase (Janthinobacterium sp. (strain Marseille) (Minibacterium massiliensis)).